Here is a 199-residue protein sequence, read N- to C-terminus: Superoxide dismutase [Mn/Fe] 1 (199 aa).

Residues His27, His81, Asp161, and His165 each coordinate Fe(3+). Mn(2+) contacts are provided by His27, His81, Asp161, and His165.

The protein belongs to the iron/manganese superoxide dismutase family. Homodimer. Can also form a heterodimer with SodM. Mn(2+) is required as a cofactor. The cofactor is Fe(3+).

The enzyme catalyses 2 superoxide + 2 H(+) = H2O2 + O2. Functionally, destroys superoxide anion radicals which are normally produced within the cells and which are toxic to biological systems. Catalyzes the dismutation of superoxide anion radicals into O2 and H2O2 by successive reduction and oxidation of the transition metal ion at the active site. The chain is Superoxide dismutase [Mn/Fe] 1 (sodA) from Staphylococcus aureus (strain USA300).